A 579-amino-acid chain; its full sequence is Maintenance of mitochondrial morphology protein 1 (579 aa).

Topologically, residues 1–43 are lumenal; that stretch reads MQQPQQQDLQIGLPYAPVQPPIPSPAAYFAYLPSPSRWTFTQG. The chain crosses the membrane as a helical span at residues 44 to 64; sequence LIVGQVSMVIVALLLIRYVIF. The Cytoplasmic segment spans residues 65–579; sequence EDSATALEKE…GLRNRPGFVQ (515 aa). The SMP-LTD domain maps to 150–391; it reads LPESADWLNV…WPRYWSLTLP (242 aa). Disordered regions lie at residues 309 to 332, 460 to 479, and 558 to 579; these read VLPT…RSRH, RPSL…SGLR, and SSVL…GFVQ. 2 stretches are compositionally biased toward low complexity: residues 311-328 and 465-476; these read PTAN…ATPP and SSRPPHVRSSSS.

The protein belongs to the MMM1 family. As to quaternary structure, homodimer. Component of the ER-mitochondria encounter structure (ERMES) or MDM complex, composed of MMM1, MDM10, MDM12 and MDM34. An MMM1 homodimer associates with one molecule of MDM12 on each side in a pairwise head-to-tail manner, and the SMP-LTD domains of MMM1 and MDM12 generate a continuous hydrophobic tunnel for phospholipid trafficking.

It is found in the endoplasmic reticulum membrane. Its function is as follows. Component of the ERMES/MDM complex, which serves as a molecular tether to connect the endoplasmic reticulum (ER) and mitochondria. Components of this complex are involved in the control of mitochondrial shape and protein biogenesis, and function in nonvesicular lipid trafficking between the ER and mitochondria. The MDM12-MMM1 subcomplex functions in the major beta-barrel assembly pathway that is responsible for biogenesis of all outer membrane beta-barrel proteins, and acts in a late step after the SAM complex. The MDM10-MDM12-MMM1 subcomplex further acts in the TOM40-specific pathway after the action of the MDM12-MMM1 complex. Essential for establishing and maintaining the structure of mitochondria and maintenance of mtDNA nucleoids. This chain is Maintenance of mitochondrial morphology protein 1, found in Mycosarcoma maydis (Corn smut fungus).